The following is a 243-amino-acid chain: MSKTHFGFESVEENEKAKKVAGVFHSVASNYDLMNDLMSAGMHRAWKAFTIAQANVRPGFKVLDIAAGTGDLTKSFAKAAGPTGEVWHTDINESMLRVGRDRLLDKGVVTPSLLCDAEKIPFPDNYFDVVTVAFGLRNMTHKDAALAEMRRVTKPGGRVMVLEFSKVWDPLKKAYDLYSFKVLPWLGDKFAKDAESYRYLAESIRMHPDQDTLKTMMEQAGLDAVKYYNLSGGVVALHLGTKY.

Residues T69, D90, and 116-117 each bind S-adenosyl-L-methionine; that span reads DA.

This sequence belongs to the class I-like SAM-binding methyltransferase superfamily. MenG/UbiE family.

It catalyses the reaction a 2-demethylmenaquinol + S-adenosyl-L-methionine = a menaquinol + S-adenosyl-L-homocysteine + H(+). The catalysed reaction is a 2-methoxy-6-(all-trans-polyprenyl)benzene-1,4-diol + S-adenosyl-L-methionine = a 5-methoxy-2-methyl-3-(all-trans-polyprenyl)benzene-1,4-diol + S-adenosyl-L-homocysteine + H(+). Its pathway is quinol/quinone metabolism; menaquinone biosynthesis; menaquinol from 1,4-dihydroxy-2-naphthoate: step 2/2. It participates in cofactor biosynthesis; ubiquinone biosynthesis. Functionally, methyltransferase required for the conversion of demethylmenaquinol (DMKH2) to menaquinol (MKH2) and the conversion of 2-polyprenyl-6-methoxy-1,4-benzoquinol (DDMQH2) to 2-polyprenyl-3-methyl-6-methoxy-1,4-benzoquinol (DMQH2). In Burkholderia cenocepacia (strain ATCC BAA-245 / DSM 16553 / LMG 16656 / NCTC 13227 / J2315 / CF5610) (Burkholderia cepacia (strain J2315)), this protein is Ubiquinone/menaquinone biosynthesis C-methyltransferase UbiE.